A 222-amino-acid polypeptide reads, in one-letter code: Protein MKS1 (222 aa).

The interval 1-61 (MDPSEYFAGG…PNRDQPPPYI (61 aa)) is disordered. Over residues 12 to 21 (PSDQQNQKRQ) the composition is skewed to polar residues. S30 carries the phosphoserine modification. Over residues 37 to 46 (DSHKIKKPPK) the composition is skewed to basic residues. The span at 47–61 (HPAPPPNRDQPPPYI) shows a compositional bias: pro residues. S72 carries the post-translational modification Phosphoserine. A VQ motif is present at residues 83-92 (FMNVVQRLTG). Positions 105–130 (GDVSPAARLASTENASPRGGKEPAAR) are disordered. Residues S108 and S120 each carry the phosphoserine modification.

In terms of assembly, interacts with MPK4, WRKY25 and WRKY33. Post-translationally, phosphorylated on serine residue by MPK4.

The protein localises to the nucleus. Functionally, regulator of plant defense response. May contribute to MPK4-regulated defense activation by coupling the kinase to specific WRKY transcription factors. This Arabidopsis thaliana (Mouse-ear cress) protein is Protein MKS1 (MKS1).